The following is a 156-amino-acid chain: ATP synthase subunit b (156 aa).

Residues 12–32 traverse the membrane as a helical segment; sequence IAFAIFVWFCVKYVWPPITAA.

It belongs to the ATPase B chain family. As to quaternary structure, F-type ATPases have 2 components, F(1) - the catalytic core - and F(0) - the membrane proton channel. F(1) has five subunits: alpha(3), beta(3), gamma(1), delta(1), epsilon(1). F(0) has three main subunits: a(1), b(2) and c(10-14). The alpha and beta chains form an alternating ring which encloses part of the gamma chain. F(1) is attached to F(0) by a central stalk formed by the gamma and epsilon chains, while a peripheral stalk is formed by the delta and b chains.

It localises to the cell inner membrane. F(1)F(0) ATP synthase produces ATP from ADP in the presence of a proton or sodium gradient. F-type ATPases consist of two structural domains, F(1) containing the extramembraneous catalytic core and F(0) containing the membrane proton channel, linked together by a central stalk and a peripheral stalk. During catalysis, ATP synthesis in the catalytic domain of F(1) is coupled via a rotary mechanism of the central stalk subunits to proton translocation. Its function is as follows. Component of the F(0) channel, it forms part of the peripheral stalk, linking F(1) to F(0). The protein is ATP synthase subunit b of Marinobacter nauticus (strain ATCC 700491 / DSM 11845 / VT8) (Marinobacter aquaeolei).